Here is a 447-residue protein sequence, read N- to C-terminus: N-succinylarginine dihydrolase (447 aa).

Residues 19 to 28 (AGLSFGNEAS), N110, and 137 to 138 (HR) contribute to the substrate site. The active site involves E174. R212 contributes to the substrate binding site. The active site involves H248. Residues D250 and N359 each coordinate substrate. C365 serves as the catalytic Nucleophile.

It belongs to the succinylarginine dihydrolase family. As to quaternary structure, homodimer.

The enzyme catalyses N(2)-succinyl-L-arginine + 2 H2O + 2 H(+) = N(2)-succinyl-L-ornithine + 2 NH4(+) + CO2. The protein operates within amino-acid degradation; L-arginine degradation via AST pathway; L-glutamate and succinate from L-arginine: step 2/5. In terms of biological role, catalyzes the hydrolysis of N(2)-succinylarginine into N(2)-succinylornithine, ammonia and CO(2). The chain is N-succinylarginine dihydrolase from Escherichia fergusonii (strain ATCC 35469 / DSM 13698 / CCUG 18766 / IAM 14443 / JCM 21226 / LMG 7866 / NBRC 102419 / NCTC 12128 / CDC 0568-73).